A 159-amino-acid polypeptide reads, in one-letter code: Cyclic pyranopterin monophosphate synthase (159 aa).

Substrate contacts are provided by residues 75 to 77 (LCH) and 113 to 114 (ME). D128 is a catalytic residue.

This sequence belongs to the MoaC family. As to quaternary structure, homohexamer; trimer of dimers.

It catalyses the reaction (8S)-3',8-cyclo-7,8-dihydroguanosine 5'-triphosphate = cyclic pyranopterin phosphate + diphosphate. Its pathway is cofactor biosynthesis; molybdopterin biosynthesis. Its function is as follows. Catalyzes the conversion of (8S)-3',8-cyclo-7,8-dihydroguanosine 5'-triphosphate to cyclic pyranopterin monophosphate (cPMP). This is Cyclic pyranopterin monophosphate synthase from Photorhabdus laumondii subsp. laumondii (strain DSM 15139 / CIP 105565 / TT01) (Photorhabdus luminescens subsp. laumondii).